We begin with the raw amino-acid sequence, 821 residues long: V-type proton ATPase subunit a3 (821 aa).

The residue at position 2 (alanine 2) is an N-acetylalanine. The Cytoplasmic segment spans residues alanine 2 to threonine 421. Positions lysine 97–alanine 144 form a coiled coil. Serine 174 bears the Phosphoserine mark. The chain crosses the membrane as a helical span at residues phenylalanine 422 to alanine 442. The Vacuolar portion of the chain corresponds to threonine 443 to arginine 469. A helical membrane pass occupies residues tyrosine 470 to phenylalanine 490. The Cytoplasmic portion of the chain corresponds to serine 491–lysine 548. A helical membrane pass occupies residues methionine 549–alanine 569. Topologically, residues arginine 570–glutamine 581 are vacuolar. The chain crosses the membrane as a helical span at residues phenylalanine 582 to isoleucine 602. The Cytoplasmic segment spans residues lysine 603–glutamine 640. The chain crosses the membrane as a helical span at residues leucine 641–isoleucine 661. The Vacuolar segment spans residues leucine 662–proline 758. A helical membrane pass occupies residues leucine 759 to methionine 779. The Cytoplasmic segment spans residues glutamate 780–glutamate 821.

Belongs to the V-ATPase 116 kDa subunit family. V-ATPase is a heteromultimeric enzyme composed of a peripheral catalytic V1 complex (components A to H) attached to an integral membrane V0 proton pore complex (components: a, c, c'', d and e). Expressed in etiolated seedlings hypocotyls.

The protein resides in the vacuole membrane. Functionally, essential component of the vacuolar proton pump (V-ATPase), a multimeric enzyme that catalyzes the translocation of protons across the membranes. Required for assembly and activity of the V-ATPase. Involved in vacuolar nutrient storage (e.g. accumulation and storage of nitrate) and in tolerance to some toxic ions (e.g. zinc ions sequestration in vacuoles). This chain is V-type proton ATPase subunit a3 (VHA-a3), found in Arabidopsis thaliana (Mouse-ear cress).